The chain runs to 446 residues: ASTKGPSVFPLAPCSRSTSGGTAALGCLVKDYFPEPVTVSWNSGALTSGVHTFPAVLQSSGLYSLSSVVTVPSSSLGTQTYTCNVNHKPSNTKVDKRVELKTPLGDTTHTCPRCPEPKSCDTPPPCPRCPEPKSCDTPPPCPRCPEPKSCDTPPPCPRCPAPELLGGPSVFLFPPKPKDTLMISRTPEVTCVVVDVSHEDPEVQFKWYVDGVEVHNAKTKPREEQYNSTFRVVSVLTVLHQDWLNGKEYKCKVSNKALPAPIEKTISKTKGQPREPQVYTLPPSREEMTKNQVSLTCLVKGFYPSDIAVEWESSGQPENNYNTTPPMLDSDGSFFLYSKLTVDKSRWQQGNIFSCSVMHEALHNRFTQKSLSLSPELQLEESCAEAQDGELDGLWTTITIFITLFLLSVCYSATVTFFKVKWIFSSVVDLKQTIIPDYRNMIGQGA.

The segment at 1-98 is CH1; sequence ASTKGPSVFP…PSNTKVDKRV (98 aa). Residues 1–397 lie on the Extracellular side of the membrane; it reads ASTKGPSVFP…DGELDGLWTT (397 aa). Residues 6–99 enclose the Ig-like 1 domain; it reads PSVFPLAPCS…SNTKVDKRVE (94 aa). Cysteines 27 and 83 form a disulfide. The segment at 99-160 is hinge; that stretch reads ELKTPLGDTT…DTPPPCPRCP (62 aa). 3 repeats span residues 116–130, 131–145, and 146–160; these read EPKS…PRCP. 3 O-linked (GalNAc...) threonine glycosylation sites follow: Thr-122, Thr-137, and Thr-152. The interval 161–270 is CH2; that stretch reads APELLGGPSV…PIEKTISKTK (110 aa). Ig-like domains are found at residues 168 to 267 and 276 to 372; these read PSVF…KTIS and PQVY…KSLS. 2 cysteine pairs are disulfide-bonded: Cys-191–Cys-251 and Cys-297–Cys-355. N-linked (GlcNAc...) asparagine glycans are attached at residues Asn-227 and Asn-322. Residues 271–376 form a CH3 region; the sequence is GQPREPQVYT…TQKSLSLSPE (106 aa). A helical membrane pass occupies residues 398–418; the sequence is ITIFITLFLLSVCYSATVTFF. At 419–446 the chain is on the cytoplasmic side; the sequence is KVKWIFSSVVDLKQTIIPDYRNMIGQGA.

As to quaternary structure, immunoglobulins are composed of two identical heavy chains and two identical light chains; disulfide-linked. Post-translationally, N-linked glycans at Asn-322 are noncore fucosylated and the vast majority are diantennary species with a bisecting GlcNAc. Among them the most dominant glycans are HexNAc5Hex4, HexNAc5Hex5, and HexNAc5Hex5Sia1. In terms of processing, N-linked glycans at Asn-227 are diantennary core fucosylated structures without bisecting GlcNAc (HexNAc4Hex4Fuc1, HexNAc4Hex5Fuc1, and HexNAc4Hex5Fuc1Sia1). Glycosylation on Asn-227 is required for interaction with Fc receptors and ability to activate the complement pathway. (Microbial infection) Deglycosylation on Asn-227 by S.pyogenes EndoS or Endos2 endoglucosidases prevents interaction between immunoglobulin-gamma (IgG) and Fc receptors, impairing ability to activate the complement pathway. Post-translationally, O-linked glycans are non-, mono- and disialylated core 1-type O-glycans.

It is found in the secreted. It localises to the cell membrane. Functionally, constant region of immunoglobulin heavy chains. Immunoglobulins, also known as antibodies, are membrane-bound or secreted glycoproteins produced by B lymphocytes. In the recognition phase of humoral immunity, the membrane-bound immunoglobulins serve as receptors which, upon binding of a specific antigen, trigger the clonal expansion and differentiation of B lymphocytes into immunoglobulins-secreting plasma cells. Secreted immunoglobulins mediate the effector phase of humoral immunity, which results in the elimination of bound antigens. The antigen binding site is formed by the variable domain of one heavy chain, together with that of its associated light chain. Thus, each immunoglobulin has two antigen binding sites with remarkable affinity for a particular antigen. The variable domains are assembled by a process called V-(D)-J rearrangement and can then be subjected to somatic hypermutations which, after exposure to antigen and selection, allow affinity maturation for a particular antigen. This Homo sapiens (Human) protein is Immunoglobulin heavy constant gamma 3.